A 283-amino-acid polypeptide reads, in one-letter code: Tropomyosin (283 aa).

Residues 1–283 adopt a coiled-coil conformation; the sequence is MDAIKKKMQA…LDSAFVELIL (283 aa).

Belongs to the tropomyosin family. Homodimer.

Tropomyosin, in association with the troponin complex, plays a central role in the calcium dependent regulation of muscle contraction. This Locusta migratoria (Migratory locust) protein is Tropomyosin.